Consider the following 500-residue polypeptide: Pyridine nucleotide-disulfide oxidoreductase domain-containing protein 1 (500 aa).

M1 bears the N-acetylmethionine mark. Residues T211 to L235 are disordered. The span at Y213–A228 shows a compositional bias: basic and acidic residues.

The protein belongs to the class-I pyridine nucleotide-disulfide oxidoreductase family. PYROXD1 subfamily. FAD is required as a cofactor.

It localises to the nucleus. Its subcellular location is the cytoplasm. The protein localises to the myofibril. The protein resides in the sarcomere. Probable FAD-dependent oxidoreductase; involved in the cellular oxidative stress response. Required for normal sarcomere structure and muscle fiber integrity. In Homo sapiens (Human), this protein is Pyridine nucleotide-disulfide oxidoreductase domain-containing protein 1 (PYROXD1).